Here is a 138-residue protein sequence, read N- to C-terminus: uncharacterized protein (138 aa).

The signal sequence occupies residues 1-37 (MNSTFTSQPLLNRSEPRVFKEFYRLVIGCNPAWQVMA).

This sequence to H.influenzae HI_1631.

This is an uncharacterized protein from Sinorhizobium fredii (strain NBRC 101917 / NGR234).